The chain runs to 54 residues: Ovomucoid (54 aa).

The 51-residue stretch at 4 to 54 folds into the Kazal-like domain; it reads VDCSDYPKPACTVEYMPLCGSDNKTYGNKCNFCNAVVDSNGTLTLSHFGKC. 3 cysteine pairs are disulfide-bonded: C6/C36, C14/C33, and C22/C54. A glycan (N-linked (GlcNAc...) asparagine) is linked at N43.

The protein resides in the secreted. In Anser canagicus (Emperor goose), this protein is Ovomucoid.